A 259-amino-acid chain; its full sequence is 3-deoxy-manno-octulosonate cytidylyltransferase (259 aa).

The protein belongs to the KdsB family.

It is found in the cytoplasm. It carries out the reaction 3-deoxy-alpha-D-manno-oct-2-ulosonate + CTP = CMP-3-deoxy-beta-D-manno-octulosonate + diphosphate. It participates in nucleotide-sugar biosynthesis; CMP-3-deoxy-D-manno-octulosonate biosynthesis; CMP-3-deoxy-D-manno-octulosonate from 3-deoxy-D-manno-octulosonate and CTP: step 1/1. It functions in the pathway bacterial outer membrane biogenesis; lipopolysaccharide biosynthesis. Functionally, activates KDO (a required 8-carbon sugar) for incorporation into bacterial lipopolysaccharide in Gram-negative bacteria. In Actinobacillus succinogenes (strain ATCC 55618 / DSM 22257 / CCUG 43843 / 130Z), this protein is 3-deoxy-manno-octulosonate cytidylyltransferase.